The following is a 619-amino-acid chain: MKMATPANPLRDPNTLSNYNKFRTVHTSVNFEIRFDQKRLVGNVIHRLKSLTNAESKEVILDSSYLEVKSVKVNGEAAEWQLLPRFEPYGSPLKISLEQAIPLDELIEVDISVNTTEKCTALQWLNPEQTSNGKHPYMFSQCQAIHARAIFPCQDTPDVKATFDFNLSSPLPVIASGVPVKQDASPPQSSGSIYYRFEQKVPIPSYLFAIASGDIAQAQIGPRSHVAVSPDRLDECKWELEGDTERFLQTIGNIIFPYVWGEYNVLILPPSFPYGGMENPVYTFATPSIISKDRQNVDVIAHEISHSWSGNLVTNCSWEHFWLNEGWTTYLERRIQAAIHGEPYRHFSAIIGWKHLVDSVERHGDTHEFTKLVVDLKGKDPDDAFSSVPYEKGFTFIFHLENLIGKDKFDKFIPHYFTRFRGKSLDSYEFKSCILDFFASDEESHVLLNKLDWDSWFYKPGLPPKPSFDTSLVDVVYELANKWKYISQSSFSPKASDMDGLVANQIVVFLEQVLLFDNPLTPEQSRFMGQVYNFAQSQNIEVSYLYLQVGLKAGDDSIVEPTIKLLGEIGRMKFVRPLYRTLEKFNRDIAVDTFEKHKNFYHPICRGLLEKDLFGDKGA.

Residues 141 to 143 (QCQ) and 273 to 278 (PYGGME) contribute to the a peptide site. A Zn(2+)-binding site is contributed by histidine 302. The active-site Proton acceptor is the glutamate 303. The Zn(2+) site is built by histidine 306 and glutamate 325. Catalysis depends on tyrosine 390, which acts as the Proton donor.

The protein belongs to the peptidase M1 family. Zn(2+) serves as cofactor.

It is found in the cytoplasm. The protein resides in the nucleus. The enzyme catalyses an epoxide + H2O = an ethanediol. Functionally, aminopeptidase that preferentially cleaves di- and tripeptides. Also has low epoxide hydrolase activity (in vitro). Can hydrolyze the epoxide leukotriene LTA(4) but it forms preferentially 5,6-dihydroxy-7,9,11,14-eicosatetraenoic acid rather than the cytokine leukotriene B(4) as the product compared to the homologous mammalian enzyme (in vitro). The sequence is that of Leucine aminopeptidase 2 from Coccidioides immitis (strain RS) (Valley fever fungus).